Consider the following 200-residue polypeptide: MRRQYSMWASTVAVIACGSALMLLHPVGADAPKKRCLTKPNVSKKVDMVIHQCQEEIKSSLIEDALKIFTAEHGQWHDRRKRDEGGLDFSHPTIVSHEDKWIAGCLMQCVYRKNNAIDKNGWPTLDGLVSLYTDGVNEQGYFMATLRGVDRCLKGTSKKYQIKRNDAAENFEQCEVAFDVFDCISDMITDYCSGQMEDDH.

A signal peptide spans M1 to A29. Cystine bridges form between C105-C174 and C152-C183.

This sequence belongs to the PBP/GOBP family.

The protein resides in the secreted. Present in the aqueous fluid surrounding olfactory sensory dendrites and are thought to aid in the capture and transport of hydrophobic odorants into and through this fluid. In Anopheles gambiae (African malaria mosquito), this protein is General odorant-binding protein 70 (Obp70).